The chain runs to 503 residues: Lithocholate 6-beta-hydroxylase (503 aa).

Cys-442 contributes to the heme binding site.

Belongs to the cytochrome P450 family. The cofactor is heme.

The protein resides in the endoplasmic reticulum membrane. Its subcellular location is the microsome membrane. It catalyses the reaction lithocholate + reduced [NADPH--hemoprotein reductase] + O2 = 6beta-hydroxylithocholate + oxidized [NADPH--hemoprotein reductase] + H2O + H(+). Functionally, catalyzes the 6 beta-hydroxylation of lithocholic acid and steroid hormones. The polypeptide is Lithocholate 6-beta-hydroxylase (CYP3A10) (Mesocricetus auratus (Golden hamster)).